A 202-amino-acid chain; its full sequence is Glycerol-3-phosphate acyltransferase (202 aa).

5 consecutive transmembrane segments (helical) span residues 11–31, 60–80, 88–108, 117–137, and 162–182; these read LLLFWGGIGYLLGSVPFGMVI, AAAAATLLLDGGKGAAAVLLA, AAQLAGLLAFLGHCFPVWLGF, FLGLMLALAWPVGIACCLTWL, and LLLGAPQAAVLSALLALVILW.

Belongs to the PlsY family. In terms of assembly, probably interacts with PlsX.

Its subcellular location is the cell inner membrane. The enzyme catalyses an acyl phosphate + sn-glycerol 3-phosphate = a 1-acyl-sn-glycero-3-phosphate + phosphate. The protein operates within lipid metabolism; phospholipid metabolism. Its function is as follows. Catalyzes the transfer of an acyl group from acyl-phosphate (acyl-PO(4)) to glycerol-3-phosphate (G3P) to form lysophosphatidic acid (LPA). This enzyme utilizes acyl-phosphate as fatty acyl donor, but not acyl-CoA or acyl-ACP. The sequence is that of Glycerol-3-phosphate acyltransferase from Ruegeria sp. (strain TM1040) (Silicibacter sp.).